Reading from the N-terminus, the 354-residue chain is Dihydroflavonol 4-reductase (354 aa).

Residues Lys44 and Tyr163 each coordinate NADP(+).

This sequence belongs to the NAD(P)-dependent epimerase/dehydratase family. Dihydroflavonol-4-reductase subfamily.

It carries out the reaction a (2R,3S,4S)-leucoanthocyanidin + NADP(+) = a (2R,3R)-dihydroflavonol + NADPH + H(+). It catalyses the reaction (2S)-flavan-4-ol + NADP(+) = (2S)-flavanone + NADPH + H(+). Its pathway is pigment biosynthesis; anthocyanin biosynthesis. Bifunctional enzyme involved in flavonoid metabolism. The sequence is that of Dihydroflavonol 4-reductase (ANT18) from Hordeum vulgare (Barley).